A 187-amino-acid chain; its full sequence is Small monomeric GTPase RhbA (187 aa).

Residues serine 17, valine 18, glycine 19, lysine 20, serine 21, serine 22, valine 33, and glutamate 34 each coordinate GDP. Serine 17 contributes to the GTP binding site. 5 residues coordinate GTP: glycine 19, lysine 20, serine 21, serine 22, and valine 33. Serine 21 is a Mg(2+) binding site. GTP is bound by residues tyrosine 36, threonine 39, asparagine 120, aspartate 123, and alanine 152. Positions 36–44 match the Effector region motif; that stretch reads YYPTIENTF. Threonine 39 contributes to the Mg(2+) binding site. Positions 120, 123, and 152 each coordinate GDP. The S-farnesyl cysteine moiety is linked to residue cysteine 184.

It belongs to the small GTPase superfamily. Rheb family. Farnesylation is important for efficiently activating mTORC1-mediated signaling.

It is found in the cell membrane. It catalyses the reaction GTP + H2O = GDP + phosphate + H(+). Its activity is regulated as follows. Alternates between an inactive form bound to GDP and an active form bound to GTP. In terms of biological role, small GTPase that acts as an allosteric activator of the canonical TOR pathway, an evolutionarily conserved central nutrient sensor that stimulates anabolic reactions and macromolecule biosynthesis to promote cellular biomass generation and growth. Plays a role in virulence. The chain is Small monomeric GTPase RhbA from Aspergillus fumigatus (strain ATCC MYA-4609 / CBS 101355 / FGSC A1100 / Af293) (Neosartorya fumigata).